Here is a 333-residue protein sequence, read N- to C-terminus: Glyoxylate reductase (333 aa).

NADP(+) contacts are provided by residues 158 to 161 (FGRI), 180 to 182 (SRS), and 239 to 241 (IAR). Catalysis depends on residues R241 and E270. The active-site Proton donor is H288. 288–290 (HIG) provides a ligand contact to NADP(+).

It belongs to the D-isomer specific 2-hydroxyacid dehydrogenase family. GyaR subfamily. Homodimer.

It localises to the cytoplasm. The enzyme catalyses glycolate + NAD(+) = glyoxylate + NADH + H(+). This Thermococcus kodakarensis (strain ATCC BAA-918 / JCM 12380 / KOD1) (Pyrococcus kodakaraensis (strain KOD1)) protein is Glyoxylate reductase.